A 602-amino-acid polypeptide reads, in one-letter code: Elongation factor 4 (602 aa).

Positions 2–184 (NHIRNFSIIA…QIVAKVPAPR (183 aa)) constitute a tr-type G domain. Residues 14-19 (DHGKST) and 131-134 (NKMD) each bind GTP.

Belongs to the TRAFAC class translation factor GTPase superfamily. Classic translation factor GTPase family. LepA subfamily.

The protein resides in the cell inner membrane. It catalyses the reaction GTP + H2O = GDP + phosphate + H(+). Its function is as follows. Required for accurate and efficient protein synthesis under certain stress conditions. May act as a fidelity factor of the translation reaction, by catalyzing a one-codon backward translocation of tRNAs on improperly translocated ribosomes. Back-translocation proceeds from a post-translocation (POST) complex to a pre-translocation (PRE) complex, thus giving elongation factor G a second chance to translocate the tRNAs correctly. Binds to ribosomes in a GTP-dependent manner. The chain is Elongation factor 4 from Acidovorax ebreus (strain TPSY) (Diaphorobacter sp. (strain TPSY)).